The primary structure comprises 562 residues: Tissue-type plasminogen activator (562 aa).

The first 19 residues, 1-19, serve as a signal peptide directing secretion; sequence MYALKRELWCVLLLCGAIC. Positions 20–32 are excised as a propeptide; that stretch reads TSPSQETHRRLRR. The propeptide at 33 to 35 is removed by plasmin; sequence GVR. Positions 39–81 constitute a Fibronectin type-I domain; it reads VTCRDEKTQMIYQQHQSWLRPLLRGNRVEHCWCNDGQTQCHSV. Intrachain disulfides connect cysteine 41/cysteine 71, cysteine 69/cysteine 78, cysteine 86/cysteine 97, cysteine 91/cysteine 108, cysteine 110/cysteine 119, cysteine 127/cysteine 208, cysteine 148/cysteine 190, cysteine 179/cysteine 203, cysteine 215/cysteine 296, cysteine 236/cysteine 278, cysteine 267/cysteine 291, cysteine 299/cysteine 430, cysteine 342/cysteine 358, cysteine 350/cysteine 419, cysteine 444/cysteine 519, cysteine 476/cysteine 492, and cysteine 509/cysteine 537. The important for binding to annexin A2 stretch occupies residues 42 to 52; that stretch reads RDEKTQMIYQQ. The EGF-like domain maps to 82–120; it reads PVKSCSEPRCFNGGTCLQAIYFSDFVCQCPVGFIGRQCE. A glycan (O-linked (Fuc) threonine) is linked at threonine 96. Kringle domains lie at 126–208 and 214–296; these read TCYE…TPAC and ECYT…LPQC. The N-linked (GlcNAc...) asparagine glycan is linked to asparagine 152. The Peptidase S1 domain occupies 311–561; the sequence is IKGGLYADIT…YLNWIRDNTR (251 aa). Residues histidine 357 and aspartate 406 each act as charge relay system in the active site. Asparagine 483 is a glycosylation site (N-linked (GlcNAc...) asparagine). Serine 513 functions as the Charge relay system in the catalytic mechanism.

Belongs to the peptidase S1 family. In terms of assembly, heterodimer of chain A and chain B held by a disulfide bond. Binds to fibrin with high affinity. This interaction leads to an increase in the catalytic efficiency of the enzyme due to an increase in affinity for plasminogen. Similarly, binding to heparin increases the activation of plasminogen. Binds to annexin A2, cytokeratin-8, fibronectin and laminin. Binds to mannose receptor and the low-density lipoprotein receptor-related protein (LRP1); these proteins are involved in TPA clearance. Binds LRP1B; binding is followed by internalization and degradation. Forms heterodimer with SERPINA5. Interacts with SERPINE1. In complex with SERPINE1, interacts with SORL1. In terms of processing, the single chain, almost fully active enzyme, can be further processed into a two-chain fully active form by a cleavage after Arg-310 catalyzed by plasmin, tissue kallikrein or factor Xa.

Its subcellular location is the secreted. It is found in the extracellular space. It carries out the reaction Specific cleavage of Arg-|-Val bond in plasminogen to form plasmin.. Its activity is regulated as follows. Inhibited by SERPINA5. Inhibited by SERPINE1. Its function is as follows. Converts the abundant, but inactive, zymogen plasminogen to plasmin by hydrolyzing a single Arg-Val bond in plasminogen. By controlling plasmin-mediated proteolysis, it plays an important role in tissue remodeling and degradation, in cell migration and many other physiopathological events. During oocyte activation, plays a role in cortical granule reaction in the zona reaction, which contributes to the block to polyspermy. The chain is Tissue-type plasminogen activator (PLAT) from Sus scrofa (Pig).